The following is a 314-amino-acid chain: Ribosomal RNA small subunit methyltransferase H (314 aa).

S-adenosyl-L-methionine-binding positions include 35 to 37 (GGH), aspartate 54, phenylalanine 83, aspartate 104, and glutamine 111.

This sequence belongs to the methyltransferase superfamily. RsmH family.

It localises to the cytoplasm. The catalysed reaction is cytidine(1402) in 16S rRNA + S-adenosyl-L-methionine = N(4)-methylcytidine(1402) in 16S rRNA + S-adenosyl-L-homocysteine + H(+). Specifically methylates the N4 position of cytidine in position 1402 (C1402) of 16S rRNA. The protein is Ribosomal RNA small subunit methyltransferase H of Oenococcus oeni (strain ATCC BAA-331 / PSU-1).